The sequence spans 91 residues: MARSIKKGPFVDGHLAKKVEAAVASRDRKPIKTWSRRSTILPDFIGLTIAVHNGRQHVPVLISENMVGHKLGEFALTRTFKGHAADKKAKR.

Belongs to the universal ribosomal protein uS19 family.

Functionally, protein S19 forms a complex with S13 that binds strongly to the 16S ribosomal RNA. This Methylobacillus flagellatus (strain ATCC 51484 / DSM 6875 / VKM B-1610 / KT) protein is Small ribosomal subunit protein uS19.